Here is a 1132-residue protein sequence, read N- to C-terminus: Tyrosine-protein kinase JAK2 (1132 aa).

The interval 1 to 239 is interaction with cytokine/interferon/growth hormone receptors; the sequence is MGMACLTMTE…RYRFRRFIQQ (239 aa). An FERM domain is found at 37–380; that stretch reads PVLQVYLYHS…GYYRLTADAH (344 aa). A Phosphotyrosine; by autocatalysis modification is found at Tyr119. Residues Tyr372 and Tyr373 each carry the phosphotyrosine modification. Residues 401–482 enclose the SH2; atypical domain; the sequence is HGPISMDFAI…SLKDLLNCYQ (82 aa). Phosphoserine is present on Ser523. Residues 545 to 809 enclose the Protein kinase 1 domain; it reads LIFNESLGQG…AVIRDLNSLF (265 aa). A phosphotyrosine mark is found at Tyr570 and Tyr813. The Protein kinase 2 domain maps to 849–1126; sequence LKFLQQLGKG…RDLSLRVDQI (278 aa). 855–863 contacts ATP; the sequence is LGKGNFGSV. Tyr868 bears the Phosphotyrosine; by autocatalysis mark. Residue Lys882 coordinates ATP. 2 positions are modified to phosphotyrosine; by autocatalysis: Tyr966 and Tyr972. The active-site Proton acceptor is the Asp976. Tyr1007 and Tyr1008 each carry phosphotyrosine; by autocatalysis.

This sequence belongs to the protein kinase superfamily. Tyr protein kinase family. JAK subfamily. Interacts with IL23R, SKB1 and STAM2. Interacts with EPOR. Interacts with LYN. Interacts with SIRPA. Interacts with SH2B1. Interacts with TEC. Interacts with IFNGR2 (via intracellular domain). Interacts with LEPR (Isoform B). Interacts with HSP90AB1; promotes functional activation in a heat shock-dependent manner. Interacts with STRA6. Interacts with ASB2; the interaction targets JAK2 for Notch-induced proteasomal degradation. Mg(2+) serves as cofactor. Autophosphorylated, leading to regulate its activity. Leptin promotes phosphorylation on tyrosine residues, including phosphorylation on Tyr-813. Autophosphorylation on Tyr-119 in response to EPO down-regulates its kinase activity. Autophosphorylation on Tyr-868, Tyr-966 and Tyr-972 in response to growth hormone (GH) are required for maximal kinase activity. Also phosphorylated by TEC. Phosphorylated on tyrosine residues in response to interferon gamma signaling. Phosphorylated on tyrosine residues in response to a signaling cascade that is activated by increased cellular retinol. In terms of processing, undergoes Notch-induced ubiquitination and subsequent proteasomal degradation which is mediated by ASB1 or ASB2, the substrate-recognition components of probable ECS E3 ubiquitin-protein ligase complexes. Ubiquitously expressed throughout most tissues.

The protein localises to the endomembrane system. The protein resides in the cytoplasm. It localises to the nucleus. The catalysed reaction is L-tyrosyl-[protein] + ATP = O-phospho-L-tyrosyl-[protein] + ADP + H(+). Its activity is regulated as follows. Regulated by autophosphorylation, can both activate or decrease activity. Heme regulates its activity by enhancing the phosphorylation on Tyr-1007 and Tyr-1008. In terms of biological role, non-receptor tyrosine kinase involved in various processes such as cell growth, development, differentiation or histone modifications. Mediates essential signaling events in both innate and adaptive immunity. In the cytoplasm, plays a pivotal role in signal transduction via its association with type I receptors such as growth hormone (GHR), prolactin (PRLR), leptin (LEPR), erythropoietin (EPOR), thrombopoietin (THPO); or type II receptors including IFN-alpha, IFN-beta, IFN-gamma and multiple interleukins. Following ligand-binding to cell surface receptors, phosphorylates specific tyrosine residues on the cytoplasmic tails of the receptor, creating docking sites for STATs proteins. Subsequently, phosphorylates the STATs proteins once they are recruited to the receptor. Phosphorylated STATs then form homodimer or heterodimers and translocate to the nucleus to activate gene transcription. For example, cell stimulation with erythropoietin (EPO) during erythropoiesis leads to JAK2 autophosphorylation, activation, and its association with erythropoietin receptor (EPOR) that becomes phosphorylated in its cytoplasmic domain. Then, STAT5 (STAT5A or STAT5B) is recruited, phosphorylated and activated by JAK2. Once activated, dimerized STAT5 translocates into the nucleus and promotes the transcription of several essential genes involved in the modulation of erythropoiesis. Part of a signaling cascade that is activated by increased cellular retinol and that leads to the activation of STAT5 (STAT5A or STAT5B). In addition, JAK2 mediates angiotensin-2-induced ARHGEF1 phosphorylation. Plays a role in cell cycle by phosphorylating CDKN1B. Cooperates with TEC through reciprocal phosphorylation to mediate cytokine-driven activation of FOS transcription. In the nucleus, plays a key role in chromatin by specifically mediating phosphorylation of 'Tyr-41' of histone H3 (H3Y41ph), a specific tag that promotes exclusion of CBX5 (HP1 alpha) from chromatin. Up-regulates the potassium voltage-gated channel activity of KCNA3. The polypeptide is Tyrosine-protein kinase JAK2 (Rattus norvegicus (Rat)).